Reading from the N-terminus, the 406-residue chain is WD repeat and SOCS box-containing protein 2 (406 aa).

Positions 70–89 (AKSRSSKNETKGRGSPKEKT) are disordered. WD repeat units follow at residues 107-150 (PPSK…LLLN), 153-193 (GHQD…KQIQ), 197-236 (GHLQ…LIRK), 239-278 (GHQS…RLRS), and 293-332 (VHIS…PIAF). The SOCS box domain maps to 358–406 (HVQFWTAPRVLSSLKHLCRKALRSFLTTYQVLALPIPKKMKEFLTYRTF).

Its pathway is protein modification; protein ubiquitination. In terms of biological role, may be a substrate-recognition component of a SCF-like ECS (Elongin-Cullin-SOCS-box protein) E3 ubiquitin ligase complex which mediates the ubiquitination and subsequent proteasomal degradation of target proteins. The chain is WD repeat and SOCS box-containing protein 2 (WSB2) from Bos taurus (Bovine).